The following is a 273-amino-acid chain: Imidazole glycerol phosphate synthase subunit HisF (273 aa).

Active-site residues include Asp11 and Asp134.

Belongs to the HisA/HisF family. Heterodimer of HisH and HisF.

It localises to the cytoplasm. The catalysed reaction is 5-[(5-phospho-1-deoxy-D-ribulos-1-ylimino)methylamino]-1-(5-phospho-beta-D-ribosyl)imidazole-4-carboxamide + L-glutamine = D-erythro-1-(imidazol-4-yl)glycerol 3-phosphate + 5-amino-1-(5-phospho-beta-D-ribosyl)imidazole-4-carboxamide + L-glutamate + H(+). It participates in amino-acid biosynthesis; L-histidine biosynthesis; L-histidine from 5-phospho-alpha-D-ribose 1-diphosphate: step 5/9. In terms of biological role, IGPS catalyzes the conversion of PRFAR and glutamine to IGP, AICAR and glutamate. The HisF subunit catalyzes the cyclization activity that produces IGP and AICAR from PRFAR using the ammonia provided by the HisH subunit. This Methanocella arvoryzae (strain DSM 22066 / NBRC 105507 / MRE50) protein is Imidazole glycerol phosphate synthase subunit HisF.